A 372-amino-acid polypeptide reads, in one-letter code: Protein phosphatase Mn(2+)-dependent 1K (372 aa).

The N-terminal 29 residues, 1–29 (MSTAALLTLVRSGGNQVRRRVLLRARGLQ), are a transit peptide targeting the mitochondrion. A critical for association with the BCKDH complex region spans residues 46–61 (KWSRFDPDGSGRPATW). One can recognise a PPM-type phosphatase domain in the interval 94 to 346 (NVGSASQIGK…DNTTAVVVPF (253 aa)). Residues aspartate 127 and glycine 128 each coordinate Mn(2+). The residue at position 248 (serine 248) is a Phosphoserine. Mn(2+) is bound by residues aspartate 298 and aspartate 337.

It belongs to the PP2C family. In terms of assembly, monomer. Interacts with E1 and E2 components of the branched-chain alpha-ketoacid dehydrogenase (BCKDH) complex; this interaction requires colocalization in mitochondria. Interacts with BCKDHA but not with BCKDHB of the E1 component. Interacts with the 24-meric E2 core composed of DBT monomers with a 24:1 stoichiometry; the N-terminal region (residues 49-61) of PPM1K and C-terminal linker of the lipoyl domain of DBT (residues 145-160) are critical for this interaction, whereas the lipoyl prosthetic group is dispensable. Competes with BCKDK for binding to the E2 core; this interaction is modulated by branched-chain alpha-keto acids. At steady state, BCKDH holoenzyme preferentially binds BCKDK and BCKDHA is phosphorylated. In response to high levels of branched-chain alpha-keto acids, the inhibitory BCKDK is replaced by activating PPM1K leading to BCKDHA dephosphorylation and BCAA degradation. Requires Mn(2+) as cofactor.

Its subcellular location is the mitochondrion matrix. The enzyme catalyses O-phospho-L-seryl-[3-methyl-2-oxobutanoate dehydrogenase] + H2O = L-seryl-[3-methyl-2-oxobutanoate dehydrogenase] + phosphate. The catalysed reaction is O-phospho-L-seryl-[protein] + H2O = L-seryl-[protein] + phosphate. Its pathway is protein modification. In terms of biological role, serine/threonine-protein phosphatase component of macronutrients metabolism. Forms a functional kinase and phosphatase pair with BCKDK, serving as a metabolic regulatory node that coordinates branched-chain amino acids (BCAAs) with glucose and lipid metabolism via two distinct phosphoprotein targets: mitochondrial BCKDHA subunit of the branched-chain alpha-ketoacid dehydrogenase (BCKDH) complex and cytosolic ACLY, a lipogenic enzyme of Krebs cycle. At high levels of branched-chain ketoacids, dephosphorylates and activates mitochondrial BCKDH complex, a multisubunit complex consisting of three multimeric components each involved in different steps of BCAA catabolism: E1 composed of BCKDHA and BCKDHB, E2 core composed of DBT monomers, and E3 composed of DLD monomers. Tightly associates with the E2 component of BCKDH complex and dephosphorylates BCKDHA on Ser-347. Regulates the reversible phosphorylation of ACLY in response to changes in cellular carbohydrate abundance such as occurs during fasting to feeding metabolic transition. At fasting state, appears to dephosphorylate ACLY on Ser-455 and inactivate it. Refeeding stimulates MLXIPL/ChREBP transcription factor, leading to increased BCKDK to PPM1K expression ratio, phosphorylation and activation of ACLY that ultimately results in the generation of malonyl-CoA and oxaloacetate immediate substrates of de novo lipogenesis and gluconeogenesis, respectively. Recognizes phosphosites having SxS or RxxS motifs and strictly depends on Mn(2+) ions for the phosphatase activity. Regulates Ca(2+)-induced opening of mitochondrial transition pore and apoptotic cell death. In Bos taurus (Bovine), this protein is Protein phosphatase Mn(2+)-dependent 1K (PPM1K).